Here is a 78-residue protein sequence, read N- to C-terminus: Small ribosomal subunit protein bS18 (78 aa).

It belongs to the bacterial ribosomal protein bS18 family. In terms of assembly, part of the 30S ribosomal subunit. Forms a tight heterodimer with protein bS6.

Functionally, binds as a heterodimer with protein bS6 to the central domain of the 16S rRNA, where it helps stabilize the platform of the 30S subunit. The protein is Small ribosomal subunit protein bS18 of Ligilactobacillus salivarius (strain UCC118) (Lactobacillus salivarius).